The primary structure comprises 165 residues: Phosphopantetheine adenylyltransferase (165 aa).

Serine 10 contacts substrate. Residues 10–11 and histidine 18 contribute to the ATP site; that span reads SF. Substrate is bound by residues lysine 42, leucine 74, and arginine 88. ATP is bound by residues 89-91, glutamate 99, and 124-130; these read GLR and WFYTSST.

It belongs to the bacterial CoaD family. In terms of assembly, homohexamer. Mg(2+) serves as cofactor.

It localises to the cytoplasm. The catalysed reaction is (R)-4'-phosphopantetheine + ATP + H(+) = 3'-dephospho-CoA + diphosphate. Its pathway is cofactor biosynthesis; coenzyme A biosynthesis; CoA from (R)-pantothenate: step 4/5. Reversibly transfers an adenylyl group from ATP to 4'-phosphopantetheine, yielding dephospho-CoA (dPCoA) and pyrophosphate. The protein is Phosphopantetheine adenylyltransferase of Syntrophus aciditrophicus (strain SB).